Here is a 356-residue protein sequence, read N- to C-terminus: MRAVALFPDEPELRVIEKPKPTPENGEALIRTVAVGIDGSDRRIAAGEIGGDVPDGEDHLVIGHEAVGVVEEPNGTDLARGDVVAPLVRRPVGDGSRFAANGELDMAPPGSFHECGITGAHGYMSEFFTARPGYLVPIPESRAAYGFFVEPASLVEKALDQTEAARSGFDWRPSSAFVLGNGNLGLLALTRLETGDEFERTYCLGRRDRPDPTIDVIENVGGTYVDSRELSLDEFPAVHEPVDFAFETTGHPAHAVEAVDALAPNGVVTLQGIPGSSSTVEIDGGAFHTDLVVTNKAILGVVNARRSHFRAAAEWLAETPESVLDALVTGVYGPDEIDEAFADSAETIKTVVSFDR.

Residue Asp38 participates in Zn(2+) binding. Residue Ser40 participates in substrate binding. 2 residues coordinate Zn(2+): His64 and Glu65. Positions 114 and 150 each coordinate substrate. Glu150 lines the Zn(2+) pocket. NADP(+) is bound by residues 181–184 (NGNL), 206–207 (RR), and 301–303 (VVN). Position 303 (Asn303) interacts with substrate.

It belongs to the zinc-containing alcohol dehydrogenase family. Glucose 1-dehydrogenase subfamily. Requires Zn(2+) as cofactor.

The catalysed reaction is D-glucose + NAD(+) = D-glucono-1,5-lactone + NADH + H(+). It carries out the reaction D-glucose + NADP(+) = D-glucono-1,5-lactone + NADPH + H(+). Its function is as follows. Catalyzes the NAD(P)(+)-dependent oxidation of D-glucose to D-gluconate via gluconolactone. Can utilize both NAD(+) and NADP(+) as electron acceptor. Is involved in the degradation of glucose through a modified Entner-Doudoroff pathway. This Haloterrigena turkmenica (strain ATCC 51198 / DSM 5511 / JCM 9101 / NCIMB 13204 / VKM B-1734 / 4k) (Halococcus turkmenicus) protein is Glucose 1-dehydrogenase 2.